Reading from the N-terminus, the 178-residue chain is Translation initiation factor IF-3 (178 aa).

Residues 1–20 (MRRPFKTDAPVKDGPRSNRE) are disordered.

The protein belongs to the IF-3 family. As to quaternary structure, monomer.

It is found in the cytoplasm. In terms of biological role, IF-3 binds to the 30S ribosomal subunit and shifts the equilibrium between 70S ribosomes and their 50S and 30S subunits in favor of the free subunits, thus enhancing the availability of 30S subunits on which protein synthesis initiation begins. This Rhizobium leguminosarum bv. trifolii (strain WSM2304) protein is Translation initiation factor IF-3.